The following is a 356-amino-acid chain: Nucleotide-binding protein GDI1189/Gdia_1902 (356 aa).

Residue 20 to 27 participates in ATP binding; that stretch reads GLSGAGKS. A GTP-binding site is contributed by 65–68; it reads DSRT. Positions 285–313 are disordered; that stretch reads EPGGTCDSPGKPAHIEKGAAPTDVQSGGA.

The protein belongs to the RapZ-like family.

Functionally, displays ATPase and GTPase activities. This is Nucleotide-binding protein GDI1189/Gdia_1902 from Gluconacetobacter diazotrophicus (strain ATCC 49037 / DSM 5601 / CCUG 37298 / CIP 103539 / LMG 7603 / PAl5).